The sequence spans 1053 residues: MLQKREKVLLLRTFQGRTLRIVREHYLRPSVPCNSPLCPQPAACRNDGKLLAAEVTHYVIPDWKVVQDYLEVLEFPELKGVIFMQTACQAVQHQRGRRQYNKLRNLLKDARHDCVLFANEFQQHCYLPREKGEAMEKWQTRSIYNSAVWYYHHCEDRMPIVMVTEDEEAIQKYGSETEGVFVISFKNYLDNFWPDLKAAHDLCDSILQSRRERETESQETHGKEYPEHLPLEVLEAGIKSGRYIQGILNVNKHRAQIEAFVRLHGASSKDSGLVSDILIHGSKARNRSIHGDVVVVEMLPKSEWKGRTAALGENDSDDKASGESPSEPMPTGRVVGILQKNWRDYVVTFPSKEEVQSQGKNAQKILVTPWDYRIPKIRISTQQAEALQDFRVVVRIDSWEATSVYPNGHFVRVLGRIGDLEGEIATILVENSISVVPFSEAQMCEMPVNTPENPWKVSPKEEQERKDLRTTHLVFSIDPKGCEDVDDTLSVRTLNNGNLELGVHIADVTHFVAPNSYIDVEARTRATTYYLADRRYDMLPSILSADLCSLLGGVDRYAVSVMWELDKTSYEIKKVWYGRTIIRSAYKLFYEAAQELLDGNFSIVDDIPELKALDKQSQQAKLEELVWAIGKLTDIARHIRAKRDRCGALELEGVEVRVQLDDKKNIRDLIPKQPLEVHETVAECMILANHWVAKKIWESFPHQALLRQHPPPHQEFFSELRECAKAKGFFIDTRSNKTLADSLDSANDPKDPLVNKLLRSMATQAMSNALYFSTGSCAEEEFHHYGLALDKYTHFTSPIRRYSDIVVHRLLMAAISKDKKMEIKENLFSNKNLEELCRHINNRNRAAQRSQKQSTELFQCMYFKDRDAETEERCIADGVIYSIRTNGVLVFIPRFGIKGAAYLKNKDSLVISCGPEGSSEWKPGSLQRSQNKIISTTAGGQSVTFHLFDHVTVRISVQASRCHSDTIRLEIVSNKPYMIPNTELCHQSSLLKSELVKEVTRSVEEAQLAQEVKGKVIQEEHQEYCQTKGRSLYTLLEEIRDLALLDVSDSCAM.

Residues 236 to 310 (AGIKSGRYIQ…KSEWKGRTAA (75 aa)) enclose the CSD1 domain. The disordered stretch occupies residues 306–332 (GRTAALGENDSDDKASGESPSEPMPTG). One can recognise a CSD2 domain in the interval 365-431 (ILVTPWDYRI…GEIATILVEN (67 aa)). Positions 465-816 (RKDLRTTHLV…VHRLLMAAIS (352 aa)) constitute an RNB domain. Ser989 is modified (phosphoserine).

Belongs to the RNR ribonuclease family. In terms of assembly, component of the RNA exosome complex. The catalytically inactive RNA exosome core (Exo-9) complex is believed to associate with catalytic subunits EXOSC10, and DIS3 or DIS3L in cytoplasmic- and nuclear-specific RNA exosome complex forms. The cofactor is Mg(2+).

It localises to the cytoplasm. It catalyses the reaction Exonucleolytic cleavage in the 3'- to 5'-direction to yield nucleoside 5'-phosphates.. Catalytic component of the RNA exosome complex which has 3'-&gt;5' exoribonuclease activity and participates in a multitude of cellular RNA processing and degradation events. In the cytoplasm, the RNA exosome complex is involved in general mRNA turnover and specifically degrades inherently unstable mRNAs containing AU-rich elements (AREs) within their 3' untranslated regions, and in RNA surveillance pathways, preventing translation of aberrant mRNAs. It seems to be involved in degradation of histone mRNA. The chain is DIS3-like exonuclease 1 (Dis3l) from Mus musculus (Mouse).